The chain runs to 99 residues: Putative gene 45 protein (99 aa).

In Bacillus phage SP01 (Bacteriophage SP01), this protein is Putative gene 45 protein (45).